The primary structure comprises 216 residues: Somatotropin (216 aa).

Residues 1 to 26 form the signal peptide; it reads MAAGPRNSMLLVFALLSLPWPQEVGA. His45 contributes to the Zn(2+) binding site. The cysteines at positions 78 and 189 are disulfide-linked. Ser131 carries the phosphoserine modification. Glu198 contributes to the Zn(2+) binding site. Cysteines 206 and 214 form a disulfide.

Belongs to the somatotropin/prolactin family.

Its subcellular location is the secreted. Functionally, plays an important role in growth control. Its major role in stimulating body growth is to stimulate the liver and other tissues to secrete IGF1. It stimulates both the differentiation and proliferation of myoblasts. It also stimulates amino acid uptake and protein synthesis in muscle and other tissues. The protein is Somatotropin (GH1) of Neovison vison (American mink).